Here is a 557-residue protein sequence, read N- to C-terminus: Ubiquitin C-terminal hydrolase 22 (557 aa).

The UBP-type; degenerate zinc-finger motif lies at 36–130 (FRCFNDARIK…VSKQLFGLGM (95 aa)). The Zn(2+) site is built by C56, C59, C69, C72, C77, H80, H84, and H91. A USP domain is found at 177–531 (RGLNNLGSTC…ECYMLFYAQE (355 aa)). C186 (nucleophile) is an active-site residue. H491 functions as the Proton acceptor in the catalytic mechanism.

This sequence belongs to the peptidase C19 family. In terms of assembly, component of a deubiquitination module (DUB module) formed by ENY2, SGF11, and UBP22 in Arabidopsis. Interacts directly with SGF11, but not with ENY2.

It localises to the nucleus. It is found in the nucleoplasm. The enzyme catalyses Thiol-dependent hydrolysis of ester, thioester, amide, peptide and isopeptide bonds formed by the C-terminal Gly of ubiquitin (a 76-residue protein attached to proteins as an intracellular targeting signal).. Component of a deubiquitination module (DUB module) that specifically deubiquinates monoubiquinated histone H2B (H2Bub). Does not seem to be a component of the TREX-2 complex. Seems to act independently of the SAGA multiprotein complex. The DUB module is responsible for the major H2Bub deubiquitinase activity in Arabidopsis. The sequence is that of Ubiquitin C-terminal hydrolase 22 from Arabidopsis thaliana (Mouse-ear cress).